An 86-amino-acid polypeptide reads, in one-letter code: UPF0297 protein STH1998 (86 aa).

It belongs to the UPF0297 family.

The protein is UPF0297 protein STH1998 of Symbiobacterium thermophilum (strain DSM 24528 / JCM 14929 / IAM 14863 / T).